Reading from the N-terminus, the 421-residue chain is uncharacterized protein (421 aa).

This is an uncharacterized protein from Escherichia coli (strain K12).